A 379-amino-acid polypeptide reads, in one-letter code: Putative F-box protein At5g62660 (379 aa).

An F-box domain is found at 35-84 (ALVAPEIPLDLLIEILTKLPAKSLMRFKCVSKLWSSLIRSRFFSNCYLTV).

This is Putative F-box protein At5g62660 from Arabidopsis thaliana (Mouse-ear cress).